The chain runs to 987 residues: Voltage-gated delayed rectifier potassium channel KCNH1 (987 aa).

Topologically, residues 1 to 220 (MTMAGGRKGL…LHYCVFKTTW (220 aa)) are cytoplasmic. Positions 14-94 (QNTFLENIVR…QTFENYEMNS (81 aa)) constitute a PAS domain. A PAC domain is found at 93-145 (NSFEILMYKKNRTPVWFFVKIAPIRNEQDKVVLFLCTFSDITAFKQPIEDDSC). The tract at residues 151–162 (FARLTRALTSSR) is required for phosphatidylinositol bisphosphate binding. Residues 221–241 (DWIILILTFYTAILVPYNVSF) traverse the membrane as a helical segment. Residues 242–248 (KTRQNNV) lie on the Extracellular side of the membrane. The helical transmembrane segment at 249-269 (AWLVVDSIVDVIFLVDIVLNF) threads the bilayer. The Cytoplasmic segment spans residues 270–290 (HTTFVGPAGEVISDPKLIRMN). A helical transmembrane segment spans residues 291-309 (YLKTWFVIDLLSCLPYDVI). Over 310–345 (NAFENVDEVSAFMGDPGKIGFADQIPPPLEGRESQG) the chain is Extracellular. The chain crosses the membrane as a helical; Voltage-sensor span at residues 346–368 (ISSLFSSLKVVRLLRLGRVARKL). Residues 369-377 (DHYIEYGAA) lie on the Cytoplasmic side of the membrane. Residues 378–399 (VLVLLVCVFGLAAHWMACIWYS) form a helical membrane-spanning segment. Residues 400-448 (IGDYEIFDEDTKTIRNNSWLYQLAMDIGTPYQFNGSGSGKWEGGPSKNS) lie on the Extracellular side of the membrane. N-linked (GlcNAc...) asparagine glycosylation is found at Asn-415 and Asn-433. Positions 449–470 (VYISSLYFTMTSLTSVGFGNIA) form an intramembrane region, pore-forming. Positions 463-468 (SVGFGN) match the Selectivity filter motif. At 471–477 (PSTDIEK) the chain is on the extracellular side. The helical transmembrane segment at 478 to 498 (IFAVAIMMIGSLLYATIFGNV) threads the bilayer. Topologically, residues 499 to 987 (TTIFQQMYAN…ESERDIFGAS (489 aa)) are cytoplasmic. Positions 673-770 (KRDALQKVLE…LDDLDVEKGS (98 aa)) are calmodulin-binding. The segment at 699–701 (YNL) is interaction with cyclic nucleotide-binding pocket. Positions 922–962 (AAVLEVKHELKEDIKALSTKMTSIEKQLSEILRILTSRRSS) are CAD (involved in subunit assembly). The disordered stretch occupies residues 960–987 (RSSQSPQELFEISRPQSPESERDIFGAS). Phosphoserine occurs at positions 972, 976, and 979. Over residues 978 to 987 (ESERDIFGAS) the composition is skewed to basic and acidic residues.

It belongs to the potassium channel family. H (Eag) (TC 1.A.1.20) subfamily. Kv10.1/KCNH1 sub-subfamily. Homomultimer. The potassium channel is composed of a homo- or heterotetrameric complex of pore-forming alpha subunits that can associate with modulating beta subunits. Heteromultimer with KCNH5/EAG2. Interacts with ALG10B. Interacts with RABEP1. Interacts (via C-terminus) with CTTN. Interacts (via C-terminal cytoplasmic region) with Ca(2+)-bound calmodulin. Channel activity is regulated via tyrosine phosphorylation/dephosphorylation by SRC and PTPN6. Detected in cerebellum, cortex and retina.

The protein localises to the cell membrane. Its subcellular location is the nucleus inner membrane. It localises to the cell projection. It is found in the dendrite. The protein resides in the axon. The protein localises to the presynaptic cell membrane. Its subcellular location is the perikaryon. It localises to the postsynaptic density membrane. It is found in the early endosome membrane. The enzyme catalyses K(+)(in) = K(+)(out). With respect to regulation, channel activity is inhibited by interaction with Ca(2+)-bound calmodulin. Interaction of a single pore-forming alpha subunit with a calmodulin chain is sufficient to promote channel closure. Extracellular magnesium ion concentrations up to 4 mM modulate channel activity by slowing down current activation in a reversible fashion. Channel activity is not regulated by cyclic nucleotides. Channel activity is inhibited by binding intracellular phosphatidylinositol-3,5-bisphosphate and phosphatidylinositol-4,5-bisphosphate (PIP2), but is not inhibited by phosphatidylinositol 4-phosphate. Pore-forming (alpha) subunit of a voltage-gated delayed rectifier potassium channel that mediates outward-rectifying potassium currents which, on depolarization, reaches a steady-state level and do not inactivate. The activation kinetics depend on the prepulse potential and external divalent cation concentration. With negative prepulses, the current activation is delayed and slowed down several fold, whereas more positive prepulses speed up activation. The time course of activation is biphasic with a fast and a slowly activating current component. Activates at more positive membrane potentials and exhibit a steeper activation curve. Channel properties are modulated by subunit assembly. Mediates IK(NI) current in myoblasts. Involved in the regulation of cell proliferation and differentiation, in particular adipogenic and osteogenic differentiation in bone marrow-derived mesenchymal stem cells (MSCs). The sequence is that of Voltage-gated delayed rectifier potassium channel KCNH1 from Bos taurus (Bovine).